Here is a 393-residue protein sequence, read N- to C-terminus: Elongation factor Tu (393 aa).

A tr-type G domain is found at 10–203 (KPHVNIGTIG…AVDDYIPEPV (194 aa)). Positions 19–26 (GHVDHGKT) are G1. 19 to 26 (GHVDHGKT) is a GTP binding site. Position 26 (T26) interacts with Mg(2+). A G2 region spans residues 60–64 (GITIS). The segment at 81–84 (DCPG) is G3. GTP-binding positions include 81 to 85 (DCPGH) and 136 to 139 (NKVD). The tract at residues 136 to 139 (NKVD) is G4. The tract at residues 173 to 175 (SAL) is G5.

It belongs to the TRAFAC class translation factor GTPase superfamily. Classic translation factor GTPase family. EF-Tu/EF-1A subfamily. As to quaternary structure, monomer.

It localises to the cytoplasm. The enzyme catalyses GTP + H2O = GDP + phosphate + H(+). GTP hydrolase that promotes the GTP-dependent binding of aminoacyl-tRNA to the A-site of ribosomes during protein biosynthesis. The protein is Elongation factor Tu of Chlorobium phaeobacteroides (strain BS1).